The sequence spans 66 residues: Beta-toxin Chui2 (66 aa).

The region spanning 1-66 (KEGYIVNSYT…VWPLKNKTCN (66 aa)) is the LCN-type CS-alpha/beta domain. 4 disulfides stabilise this stretch: C12/C65, C16/C41, C25/C46, and C29/C48. At N66 the chain carries Asparagine amide.

The protein belongs to the long (4 C-C) scorpion toxin superfamily. Sodium channel inhibitor family. Beta subfamily. In terms of tissue distribution, expressed by the venom gland.

The protein localises to the secreted. Beta toxins bind voltage-independently at site-4 of sodium channels (Nav) and shift the voltage of activation toward more negative potentials thereby affecting sodium channel activation and promoting spontaneous and repetitive firing. This is Beta-toxin Chui2 from Centruroides huichol (Scorpion).